The sequence spans 439 residues: Cell division protein FtsA (439 aa).

It belongs to the FtsA/MreB family. In terms of assembly, self-interacts. Interacts with FtsZ.

Its subcellular location is the cell inner membrane. Functionally, cell division protein that is involved in the assembly of the Z ring. May serve as a membrane anchor for the Z ring. This is Cell division protein FtsA from Shigella flexneri.